Reading from the N-terminus, the 260-residue chain is Myb transcription factor 42 (260 aa).

HTH myb-type domains lie at 9-61 and 62-116; these read KAHT…INYL and RPDL…RRKL. 2 consecutive DNA-binding regions (H-T-H motif) follow at residues 37–61 and 89–112; these read WRSL…INYL and WSLI…NTHI.

As to expression, mainly expressed in the aerial parts and, to a lower extent, in roots.

Its subcellular location is the nucleus. Functionally, transcription factor that negatively regulates the expression of caffeic acid O-methyl-transferase genes (COMTs) and of other genes involved in the biosynthesis of lignin, thus preventing lignification. The protein is Myb transcription factor 42 of Zea mays (Maize).